A 197-amino-acid polypeptide reads, in one-letter code: Adenylyl-sulfate kinase (197 aa).

33–40 (GLSGSGKS) contributes to the ATP binding site. S107 functions as the Phosphoserine intermediate in the catalytic mechanism.

This sequence belongs to the APS kinase family.

It catalyses the reaction adenosine 5'-phosphosulfate + ATP = 3'-phosphoadenylyl sulfate + ADP + H(+). Its pathway is sulfur metabolism; hydrogen sulfide biosynthesis; sulfite from sulfate: step 2/3. Functionally, catalyzes the synthesis of activated sulfate. This is Adenylyl-sulfate kinase from Bacillus velezensis (strain DSM 23117 / BGSC 10A6 / LMG 26770 / FZB42) (Bacillus amyloliquefaciens subsp. plantarum).